The chain runs to 673 residues: Glycine--tRNA ligase beta subunit (673 aa).

This sequence belongs to the class-II aminoacyl-tRNA synthetase family. Tetramer of two alpha and two beta subunits.

Its subcellular location is the cytoplasm. It carries out the reaction tRNA(Gly) + glycine + ATP = glycyl-tRNA(Gly) + AMP + diphosphate. This Lactococcus lactis subsp. cremoris (strain MG1363) protein is Glycine--tRNA ligase beta subunit.